We begin with the raw amino-acid sequence, 260 residues long: tRNA pseudouridine synthase A (260 aa).

Asp52 functions as the Nucleophile in the catalytic mechanism. Residue Tyr110 participates in substrate binding.

The protein belongs to the tRNA pseudouridine synthase TruA family. In terms of assembly, homodimer.

The enzyme catalyses uridine(38/39/40) in tRNA = pseudouridine(38/39/40) in tRNA. In terms of biological role, formation of pseudouridine at positions 38, 39 and 40 in the anticodon stem and loop of transfer RNAs. The polypeptide is tRNA pseudouridine synthase A (Spiroplasma kunkelii).